The primary structure comprises 439 residues: uncharacterized protein (439 aa).

A signal peptide spans 1–19 (MKKLLLTASIICLASAGLA).

This is an uncharacterized protein from Rickettsia felis (strain ATCC VR-1525 / URRWXCal2) (Rickettsia azadi).